We begin with the raw amino-acid sequence, 153 residues long: 6,7-dimethyl-8-ribityllumazine synthase (153 aa).

5-amino-6-(D-ribitylamino)uracil contacts are provided by residues Phe22, 56–58 (AFE), and 80–82 (AVI). 85 to 86 (ST) is a binding site for (2S)-2-hydroxy-3-oxobutyl phosphate. His88 acts as the Proton donor in catalysis. Residue Phe113 coordinates 5-amino-6-(D-ribitylamino)uracil. Arg127 contributes to the (2S)-2-hydroxy-3-oxobutyl phosphate binding site.

It belongs to the DMRL synthase family.

The enzyme catalyses (2S)-2-hydroxy-3-oxobutyl phosphate + 5-amino-6-(D-ribitylamino)uracil = 6,7-dimethyl-8-(1-D-ribityl)lumazine + phosphate + 2 H2O + H(+). Its pathway is cofactor biosynthesis; riboflavin biosynthesis; riboflavin from 2-hydroxy-3-oxobutyl phosphate and 5-amino-6-(D-ribitylamino)uracil: step 1/2. In terms of biological role, catalyzes the formation of 6,7-dimethyl-8-ribityllumazine by condensation of 5-amino-6-(D-ribitylamino)uracil with 3,4-dihydroxy-2-butanone 4-phosphate. This is the penultimate step in the biosynthesis of riboflavin. In Clostridium botulinum (strain Eklund 17B / Type B), this protein is 6,7-dimethyl-8-ribityllumazine synthase.